We begin with the raw amino-acid sequence, 165 residues long: uncharacterized protein (165 aa).

The helical transmembrane segment at 20–40 (INLIASIVLWLLFVITVIGTF) threads the bilayer. Asn-51 is a glycosylation site (N-linked (GlcNAc...) asparagine; by host). A helical membrane pass occupies residues 97–117 (VGIIVILIFMLMIIMNGFYQM).

The protein resides in the membrane. This is an uncharacterized protein from Acanthamoeba polyphaga (Amoeba).